A 537-amino-acid chain; its full sequence is CTP synthase (537 aa).

The tract at residues Met-1–Leu-265 is amidoligase domain. Ser-13 contacts CTP. UTP is bound at residue Ser-13. An ATP-binding site is contributed by Gly-14–Ile-19. Position 54 (Tyr-54) interacts with L-glutamine. Asp-71 serves as a coordination point for ATP. Mg(2+) is bound by residues Asp-71 and Glu-139. CTP is bound by residues Asp-146 to Glu-148, Lys-186 to Gln-191, and Lys-222. Residues Lys-186–Gln-191 and Lys-222 each bind UTP. The region spanning Glu-290–Glu-532 is the Glutamine amidotransferase type-1 domain. Gly-351 is an L-glutamine binding site. Cys-378 (nucleophile; for glutamine hydrolysis) is an active-site residue. Residues Phe-379–Gln-382, Glu-402, and Arg-459 contribute to the L-glutamine site. Active-site residues include His-505 and Glu-507.

It belongs to the CTP synthase family. Homotetramer.

The catalysed reaction is UTP + L-glutamine + ATP + H2O = CTP + L-glutamate + ADP + phosphate + 2 H(+). It catalyses the reaction L-glutamine + H2O = L-glutamate + NH4(+). The enzyme catalyses UTP + NH4(+) + ATP = CTP + ADP + phosphate + 2 H(+). It functions in the pathway pyrimidine metabolism; CTP biosynthesis via de novo pathway; CTP from UDP: step 2/2. Allosterically activated by GTP, when glutamine is the substrate; GTP has no effect on the reaction when ammonia is the substrate. The allosteric effector GTP functions by stabilizing the protein conformation that binds the tetrahedral intermediate(s) formed during glutamine hydrolysis. Inhibited by the product CTP, via allosteric rather than competitive inhibition. Catalyzes the ATP-dependent amination of UTP to CTP with either L-glutamine or ammonia as the source of nitrogen. Regulates intracellular CTP levels through interactions with the four ribonucleotide triphosphates. The protein is CTP synthase of Pyrococcus furiosus (strain ATCC 43587 / DSM 3638 / JCM 8422 / Vc1).